The chain runs to 521 residues: Small ribosomal subunit protein mL104 (rPPR9) (521 aa).

A mitochondrion-targeting transit peptide spans 1–59; that stretch reads MPPSLPSLQLRRLLLRSFISSSSVNTLQSQPRIISSKPLFSPLPPSRSSIFSTFPSRFF. PPR repeat units lie at residues 174–204, 210–240, 244–278, 279–313, 321–355, 356–390, 393–427, and 428–462; these read GGKT…MEND, DKES…TANE, DENI…GFEI, GTKA…LLEM, NTET…GCQP, DAET…GYGE, NKKE…GCKP, and GIKT…GIAV. Over residues 480 to 495 the composition is skewed to basic and acidic residues; sequence EVDSNVKKRETLPEKT. Residues 480–499 form a disordered region; sequence EVDSNVKKRETLPEKTARKK. The short motif at 486-503 is the Nuclear localization signal element; it reads KKRETLPEKTARKKKRLK.

Belongs to the PPR family. P subfamily. In terms of assembly, interacts with NAP1;1 and TCP8. Able to bind mitochondrial RNA in vitro. Component of the mitochondrial ribosome small subunit. As to expression, expressed in root tips, lateral root primordia and leaf primordia. Highly detected in the mature pollen grains.

It is found in the mitochondrion matrix. The protein localises to the nucleus. In terms of biological role, RNA-binding protein that functions in both mitochondrion and nucleus. In mitochondrion, it is associated with polysomes and may play a role in translation. Required during embryogenesis. In nucleus, might be involved in the regulation of its own gene expression. The chain is Small ribosomal subunit protein mL104 (rPPR9) (PNM1) from Arabidopsis thaliana (Mouse-ear cress).